Consider the following 184-residue polypeptide: Protein Syd (184 aa).

Belongs to the Syd family.

Its subcellular location is the cell inner membrane. In terms of biological role, interacts with the SecY protein in vivo. May bind preferentially to an uncomplexed state of SecY, thus functioning either as a chelating agent for excess SecY in the cell or as a regulatory factor that negatively controls the translocase function. The polypeptide is Protein Syd (Photorhabdus laumondii subsp. laumondii (strain DSM 15139 / CIP 105565 / TT01) (Photorhabdus luminescens subsp. laumondii)).